The sequence spans 262 residues: Hydroxyethylthiazole kinase (262 aa).

Met50 lines the substrate pocket. The ATP site is built by Arg125 and Thr171. Gly198 contacts substrate.

The protein belongs to the Thz kinase family. Mg(2+) is required as a cofactor.

The enzyme catalyses 5-(2-hydroxyethyl)-4-methylthiazole + ATP = 4-methyl-5-(2-phosphooxyethyl)-thiazole + ADP + H(+). It participates in cofactor biosynthesis; thiamine diphosphate biosynthesis; 4-methyl-5-(2-phosphoethyl)-thiazole from 5-(2-hydroxyethyl)-4-methylthiazole: step 1/1. In terms of biological role, catalyzes the phosphorylation of the hydroxyl group of 4-methyl-5-beta-hydroxyethylthiazole (THZ). The protein is Hydroxyethylthiazole kinase of Shigella sonnei (strain Ss046).